The sequence spans 328 residues: MSSDEGETPKMGFGHAMLLKMGWKGKGLGVEEDGRTEIIVNKKKQDKVGVGASISDRVSTSNNWESTNEAYDHILAKLNGVDEITWKKKNNKFVKEEKITFKRTIKKNSKKNKDESDSDSDSDSESESDKKPTKKQKVQSDSDSSCSDSSSSSSSSSSESEKEDKSSSNTTSDESDKESSSDSSDSSESENEKKDKKKIVNNKKGKDSDSSSSSDDSCSSESDSSSSSSSSSSSSDSSSESDSDNKNKNKNKNKNKKSKESDSSSSSSSSESEEEEKKEVAKKSFSVSKTRYQRLLRAKSVKNYSEDDLREILGYRPNQDTRKLKTKE.

One can recognise a G-patch domain in the interval Lys10 to Ser55. Residues Glu97–Arg291 are disordered. The span at Phe101–Lys110 shows a compositional bias: basic residues. A compositionally biased stretch (acidic residues) spans Ser116 to Ser126. 2 stretches are compositionally biased toward low complexity: residues Asp141–Ser158 and Ser210–Glu240. Residues Lys248–Lys257 show a composition bias toward basic residues.

This is an uncharacterized protein from Dictyostelium discoideum (Social amoeba).